A 455-amino-acid polypeptide reads, in one-letter code: J protein JJJ2 (455 aa).

The region spanning 12–76 (TYYSILGVPT…QLRAEYDKKL (65 aa)) is the J domain. The segment at 104–241 (RNSKPYEQQP…RKKSEKKATP (138 aa)) is disordered. The segment covering 133 to 144 (NSNPHNENSSNN) has biased composition (low complexity). Residues 156-168 (TLSKDSEDKHGTD) show a composition bias toward basic and acidic residues.

The protein resides in the cytoplasm. The protein localises to the nucleus. The polypeptide is J protein JJJ2 (JJJ2) (Candida glabrata (strain ATCC 2001 / BCRC 20586 / JCM 3761 / NBRC 0622 / NRRL Y-65 / CBS 138) (Yeast)).